A 591-amino-acid chain; its full sequence is MIPGVREATAGHEPVKAELWKRIYSRVGSHWKGLILAVLLMAGAAATQPTLAVIMKPLIDGGFAGDKPQYIWSVPLAVIGLILLRGVCNFFSDYLLAWVANNVLLGIRREMFDRLLGLPDADFKRGDTGRLLNRFTIDAGNVTGYATDVITVLVRETLVVISLIAVLLYMSWLLTVIILVVMPISVWIARSFARRLRRINRETVNMNAELTRVVSEGIDGQRVIKLFDGYEAERGRFAYVNARLRRFAMRTAVADAALTPLTQVCIAVAVGAVIAVALGQANAGTLTAGAFAAFMSALAQIFDPIKRLTNLASKMQKMLVSAESVFTLVDQIPEVDEGQRTLAEPVRGKIEFRQIGHRFPEADRNTISDVSFTVEPGQTVALVGRSGSGKTTLVNMLPRFVLPTEGSILIDDVPINDVQLNSLRSHLSLVSQDVVLFDDTIAANVGYGALGKADDQRIHDALAAANLRDFVDSLPKGIHTPVGENAARLSGGQRQRLAIARALIKNAPILILDEATSALDNESERQVQSSLDRLMRGRTTLVIAHRLSTVQNADRIIVLDAGRIVEHGAHTELLAAGGLYATLYNMQFRED.

The next 5 helical transmembrane spans lie at leucine 34–isoleucine 54, isoleucine 71–phenylalanine 91, leucine 158–isoleucine 178, leucine 258–leucine 278, and threonine 285–isoleucine 305. One can recognise an ABC transmembrane type-1 domain in the interval isoleucine 35–lysine 317. Residues isoleucine 350–methionine 586 enclose the ABC transporter domain. Glycine 384–threonine 391 contributes to the ATP binding site.

It belongs to the ABC transporter superfamily. Lipid exporter (TC 3.A.1.106) family. Homodimer.

It is found in the cell inner membrane. The enzyme catalyses ATP + H2O + lipid A-core oligosaccharideSide 1 = ADP + phosphate + lipid A-core oligosaccharideSide 2.. Its function is as follows. Involved in lipopolysaccharide (LPS) biosynthesis. Translocates lipid A-core from the inner to the outer leaflet of the inner membrane. Transmembrane domains (TMD) form a pore in the inner membrane and the ATP-binding domain (NBD) is responsible for energy generation. This chain is ATP-dependent lipid A-core flippase, found in Bordetella avium (strain 197N).